A 191-amino-acid chain; its full sequence is Adenylate kinase (191 aa).

12-17 (GSGKTT) provides a ligand contact to ATP. Residues 34–63 (STGDLLRAESAKKTERGLLIEKFTSQGELV) form an NMP region. Residues T35, R40, 61 to 63 (ELV), 88 to 91 (GYPR), and Q95 contribute to the AMP site. The interval 130–136 (GRSRGAD) is LID. ATP is bound at residue R131. 2 residues coordinate AMP: R133 and R145. R173 provides a ligand contact to ATP.

Belongs to the adenylate kinase family. Monomer.

Its subcellular location is the cytoplasm. The enzyme catalyses AMP + ATP = 2 ADP. Its pathway is purine metabolism; AMP biosynthesis via salvage pathway; AMP from ADP: step 1/1. Its function is as follows. Catalyzes the reversible transfer of the terminal phosphate group between ATP and AMP. Plays an important role in cellular energy homeostasis and in adenine nucleotide metabolism. This Helicobacter pylori (strain G27) protein is Adenylate kinase.